The sequence spans 449 residues: Maturation protein A (449 aa).

It belongs to the Leviviricetes maturation protein family. In terms of assembly, interacts with the host pilus.

The protein localises to the virion. In terms of biological role, the maturation protein is required for the typical attachment of the phage to the side of the bacterial F-pili. Binds to sequences located toward each end of the genome, hence circularizing it. The RNA genome-maturation protein A complex is released from the capsid upon host receptor binding. Maturation protein A enters the cell along with the viral RNA. The protein is Maturation protein A of Pseudomonas aeruginosa (Bacteriophage PP7).